A 959-amino-acid polypeptide reads, in one-letter code: MMS19 nucleotide excision repair protein (959 aa).

HEAT repeat units lie at residues 794 to 828 (QKLFHTIMGKMGSKLANYCVHHLKAFVYVLKATPQ), 832 to 871 (KLNIEQLGPLLFKSLEEHNEAQSLCIALGICEKFVAQQDT), 874 to 915 (QGHL…YPTF), and 918 to 956 (LPHKVDVTLALAAALDDPKRLVRNTAVKARNAWYLVGAP).

Belongs to the MET18/MMS19 family. In terms of assembly, component of the CIA complex. Interacts with Xpd and galla-2. Binds to microtubules. Expressed in embryos (at protein level).

It localises to the cytoplasm. It is found in the cytoskeleton. Its subcellular location is the spindle. The protein localises to the nucleus. The protein resides in the midbody. Its function is as follows. Key component of the cytosolic iron-sulfur protein assembly (CIA) complex, a multiprotein complex that mediates the incorporation of iron-sulfur cluster into apoproteins specifically involved in DNA metabolism and genomic integrity. In the CIA complex, MMS19 acts as an adapter between early-acting CIA components and a subset of cellular target iron-sulfur proteins. Essential for diploid cell cycles, organ growth and development. Regulates mitosis by binding to Xpd and thereby competing with the Xpd-mediated repression on the Cdk-activating kinase (CAK) complex. Regulates the centrosomal localization of the MT regulator tacc, a downstream target of aurA kinase. Binds to microtubules (MT). Regulates spindle and astral MT growth, MT stability and bundling. In neuroblasts, necessary for timely and coordinated spindle assembly and orientation which is necessary for mitotic progression. In young embryos, the maternal protein is important for progression through mitosis. The polypeptide is MMS19 nucleotide excision repair protein (Drosophila melanogaster (Fruit fly)).